Here is a 295-residue protein sequence, read N- to C-terminus: ER-localized J domain-containing protein 5 (295 aa).

Residues 1–20 (MNGYWKPALVVLGLVSLSYA) form the signal peptide. At 21 to 130 (FTTIETEIFQ…GFYFSRMKPK (110 aa)) the chain is on the lumenal side. Residues 42 to 110 (DMNFYKFLKL…RKIYDYYLQN (69 aa)) enclose the J domain. The helical transmembrane segment at 131-151 (TWFLLAFIWIVVNIGQYIISI) threads the bilayer. The Cytoplasmic segment spans residues 152–295 (IQYRSQRSRI…PNGKVIYSRK (144 aa)). Residues 259–287 (KYDGNQTKKGNKVKKGSAKKGQKKMELPN) form a disordered region. Basic residues predominate over residues 267-280 (KGNKVKKGSAKKGQ).

Belongs to the DnaJ family.

The protein resides in the endoplasmic reticulum membrane. Functionally, dnaJ-like chaperone required for the folding capacity of the endoplasmic reticulum. In Saccharomyces cerevisiae (strain ATCC 204508 / S288c) (Baker's yeast), this protein is ER-localized J domain-containing protein 5 (ERJ5).